The chain runs to 302 residues: Putative S-adenosyl-L-methionine-dependent methyltransferase MAP_1622c (302 aa).

S-adenosyl-L-methionine contacts are provided by residues Asp129 and 158-159; that span reads DL.

This sequence belongs to the UPF0677 family.

Functionally, exhibits S-adenosyl-L-methionine-dependent methyltransferase activity. The chain is Putative S-adenosyl-L-methionine-dependent methyltransferase MAP_1622c from Mycolicibacterium paratuberculosis (strain ATCC BAA-968 / K-10) (Mycobacterium paratuberculosis).